A 172-amino-acid polypeptide reads, in one-letter code: Cytochrome c oxidase subunit 4 isoform 2, mitochondrial (172 aa).

The transit peptide at 1–18 directs the protein to the mitochondrion; the sequence is MFSRATRSLVMKTGGLRT. Positions 1–33 are disordered; the sequence is MFSRATRSLVMKTGGLRTQGTHSPGSAASSSQR. A compositionally biased stretch (polar residues) spans 16–33; sequence LRTQGTHSPGSAASSSQR. The Mitochondrial matrix portion of the chain corresponds to 19–101; the sequence is QGTHSPGSAA…TFAEMNHRSN (83 aa). The chain crosses the membrane as a helical span at residues 102-127; sequence EWKTVMGCVFFFIGFTALVIWWQRVY. At 128–172 the chain is on the mitochondrial intermembrane side; the sequence is VFPKKVVTLTEERKAQQLQRLLDMKSNPIQGLSAHWDYEKKEWKK.

It belongs to the cytochrome c oxidase IV family. As to quaternary structure, component of the cytochrome c oxidase (complex IV, CIV), a multisubunit enzyme composed of 14 subunits. The complex is composed of a catalytic core of 3 subunits MT-CO1, MT-CO2 and MT-CO3, encoded in the mitochondrial DNA, and 11 supernumerary subunits COX4I, COX5A, COX5B, COX6A, COX6B, COX6C, COX7A, COX7B, COX7C, COX8 and NDUFA4, which are encoded in the nuclear genome. The complex exists as a monomer or a dimer and forms supercomplexes (SCs) in the inner mitochondrial membrane with NADH-ubiquinone oxidoreductase (complex I, CI) and ubiquinol-cytochrome c oxidoreductase (cytochrome b-c1 complex, complex III, CIII), resulting in different assemblies (supercomplex SCI(1)III(2)IV(1) and megacomplex MCI(2)III(2)IV(2)). As to expression, highly expressed in lung.

The protein localises to the mitochondrion inner membrane. The protein operates within energy metabolism; oxidative phosphorylation. Functionally, component of the cytochrome c oxidase, the last enzyme in the mitochondrial electron transport chain which drives oxidative phosphorylation. The respiratory chain contains 3 multisubunit complexes succinate dehydrogenase (complex II, CII), ubiquinol-cytochrome c oxidoreductase (cytochrome b-c1 complex, complex III, CIII) and cytochrome c oxidase (complex IV, CIV), that cooperate to transfer electrons derived from NADH and succinate to molecular oxygen, creating an electrochemical gradient over the inner membrane that drives transmembrane transport and the ATP synthase. Cytochrome c oxidase is the component of the respiratory chain that catalyzes the reduction of oxygen to water. Electrons originating from reduced cytochrome c in the intermembrane space (IMS) are transferred via the dinuclear copper A center (CU(A)) of subunit 2 and heme A of subunit 1 to the active site in subunit 1, a binuclear center (BNC) formed by heme A3 and copper B (CU(B)). The BNC reduces molecular oxygen to 2 water molecules using 4 electrons from cytochrome c in the IMS and 4 protons from the mitochondrial matrix. This chain is Cytochrome c oxidase subunit 4 isoform 2, mitochondrial (Cox4i2), found in Rattus norvegicus (Rat).